Here is a 605-residue protein sequence, read N- to C-terminus: Adenine deaminase (605 aa).

Belongs to the metallo-dependent hydrolases superfamily. Adenine deaminase family. Mn(2+) serves as cofactor.

The catalysed reaction is adenine + H2O + H(+) = hypoxanthine + NH4(+). This is Adenine deaminase from Staphylothermus marinus (strain ATCC 43588 / DSM 3639 / JCM 9404 / F1).